A 130-amino-acid polypeptide reads, in one-letter code: Holo-[acyl-carrier-protein] synthase (130 aa).

The Mg(2+) site is built by D8 and E62.

It belongs to the P-Pant transferase superfamily. AcpS family. The cofactor is Mg(2+).

It is found in the cytoplasm. The catalysed reaction is apo-[ACP] + CoA = holo-[ACP] + adenosine 3',5'-bisphosphate + H(+). Transfers the 4'-phosphopantetheine moiety from coenzyme A to a Ser of acyl-carrier-protein. The polypeptide is Holo-[acyl-carrier-protein] synthase (Herminiimonas arsenicoxydans).